The chain runs to 128 residues: Large ribosomal subunit protein mL55 (128 aa).

The N-terminal 33 residues, 1 to 33 (MAAVGSLLGRLRQSTVKATGPALRRLHTSSWRA), are a transit peptide targeting the mitochondrion. Position 85 is a phosphoserine (Ser85).

Belongs to the mitochondrion-specific ribosomal protein mL55 family. As to quaternary structure, component of the mitochondrial large ribosomal subunit (mt-LSU). Mature mammalian 55S mitochondrial ribosomes consist of a small (28S) and a large (39S) subunit. The 28S small subunit contains a 12S ribosomal RNA (12S mt-rRNA) and 30 different proteins. The 39S large subunit contains a 16S rRNA (16S mt-rRNA), a copy of mitochondrial valine transfer RNA (mt-tRNA(Val)), which plays an integral structural role, and 52 different proteins.

The protein localises to the mitochondrion. This is Large ribosomal subunit protein mL55 (MRPL55) from Homo sapiens (Human).